The primary structure comprises 156 residues: Transcription elongation factor GreA (156 aa).

Positions 46–73 (AEYHAAREKQSFIEGRIKELEALLSLAE) form a coiled coil.

It belongs to the GreA/GreB family.

Functionally, necessary for efficient RNA polymerase transcription elongation past template-encoded arresting sites. The arresting sites in DNA have the property of trapping a certain fraction of elongating RNA polymerases that pass through, resulting in locked ternary complexes. Cleavage of the nascent transcript by cleavage factors such as GreA or GreB allows the resumption of elongation from the new 3'terminus. GreA releases sequences of 2 to 3 nucleotides. The polypeptide is Transcription elongation factor GreA (Cereibacter sphaeroides (strain ATCC 17025 / ATH 2.4.3) (Rhodobacter sphaeroides)).